A 100-amino-acid polypeptide reads, in one-letter code: Small ribosomal subunit protein uS14c (100 aa).

Belongs to the universal ribosomal protein uS14 family. As to quaternary structure, part of the 30S ribosomal subunit.

It localises to the plastid. It is found in the chloroplast. Functionally, binds 16S rRNA, required for the assembly of 30S particles. The polypeptide is Small ribosomal subunit protein uS14c (Populus alba (White poplar)).